We begin with the raw amino-acid sequence, 305 residues long: MTEPRRRWTAAEDALLWDLYQVQEKAPTGKCQKINWNEIARHIPGRTNKDCRKRYYNRFTGGLRKGSWTQEEDERLFRLVERYQYRWATIAQKMETRNADQCSKRWHHCLNPELERSPWTVDENMLLLSAVNTHGSSWKDIQKCHFPTRSANNIKNQYTILSRKNISLAPAHLHPCCDSPSPSKSSRRPPSTPTSTPQVPGSRQGSSYDPYDYGSLSSTPQLSATDYLPATPEAPAVNFDMAMGAFGDSCGYMPQYQPSPSFYANSPDGSELMMPETMGMRMRYDFRDGLEQEGVRYPGQETFGY.

Myb-like domains are found at residues 5-59 (RRRW…YNRF), 60-110 (TGGL…HHCL), and 111-162 (NPEL…TILS). The segment at 175–215 (PCCDSPSPSKSSRRPPSTPTSTPQVPGSRQGSSYDPYDYGS) is disordered. Over residues 198–207 (QVPGSRQGSS) the composition is skewed to polar residues.

The protein localises to the nucleus. Functionally, transcription regulator that acts as a central regulatory node for the integration of external bacterial signals leading to the regulation of secondary metabolite gene clusters such as orsellinic, lecanoric acid, cichorine, 2,4-dihydroxy-3-methyl-6-(2-oxopropyl)benzaldehyde (dba), emericellamide or microperfuranone clusters. In Emericella nidulans (strain FGSC A4 / ATCC 38163 / CBS 112.46 / NRRL 194 / M139) (Aspergillus nidulans), this protein is Myb-like transcriptional regulator basR.